We begin with the raw amino-acid sequence, 218 residues long: MANVTLNVTDNNGKEAGTLEAPEALFGFTAEEVQAHVPLIHQVVVAQRAAARQGTHAVKNRGAVSGGGRKPWKQKGTGRARQGSIRAPQWYHGGVAHGPVPRDYSQRTPKKMKAAALRYALSDRANNGRVAVVDFQLDAPSTKKAIAALAPVVADNFTTVVLSRDNVNEWLSVRNIPTVYPIFADQLNTYDVITAQYVVFSKDGLEAFVAAKTAAKEA.

Residues 54 to 106 (GTHAVKNRGAVSGGGRKPWKQKGTGRARQGSIRAPQWYHGGVAHGPVPRDYSQ) are disordered.

It belongs to the universal ribosomal protein uL4 family. Part of the 50S ribosomal subunit.

Its function is as follows. One of the primary rRNA binding proteins, this protein initially binds near the 5'-end of the 23S rRNA. It is important during the early stages of 50S assembly. It makes multiple contacts with different domains of the 23S rRNA in the assembled 50S subunit and ribosome. In terms of biological role, forms part of the polypeptide exit tunnel. The protein is Large ribosomal subunit protein uL4 of Bifidobacterium animalis subsp. lactis (strain AD011).